Consider the following 728-residue polypeptide: E3 ubiquitin-protein ligase TRIM36 (728 aa).

Residues 33–84 form an RING-type; degenerate zinc finger; that stretch reads CPACKELFTHPLILPCQHSICHKCVKELLLTLDDSFNDVGSDNSNQSSPRLR. 2 B box-type zinc fingers span residues 154 to 192 and 207 to 249; these read AIMC…WGTI and PKIL…VTTM. Cys-212, His-215, Cys-235, and His-241 together coordinate Zn(2+). Residues 271–345 are a coiled coil; sequence ESQVKSQISE…MEEYQGLLEN (75 aa). The COS domain maps to 356–413; the sequence is LKETDQSCFVQTAKQLHLRIQKATESLKSFRPAAQTSFEDYVVNTSKQTELLGELSFF. The Fibronectin type-III domain maps to 419–510; the sequence is VPEINEEQSK…RELILHTPPA (92 aa). Positions 508–720 constitute a B30.2/SPRY domain; that stretch reads PPAPVFSFLF…IQLEEPITAK (213 aa).

The protein belongs to the TRIM/RBCC family. In terms of assembly, interacts with CENPH. Highly expressed in testis, prostate and brain. Weakly expressed in kidney, lung and heart. Expressed in fetal tissues.

The protein localises to the cytoplasm. The protein resides in the cytoplasmic vesicle. It localises to the secretory vesicle. It is found in the acrosome. Its subcellular location is the cytoskeleton. The enzyme catalyses S-ubiquitinyl-[E2 ubiquitin-conjugating enzyme]-L-cysteine + [acceptor protein]-L-lysine = [E2 ubiquitin-conjugating enzyme]-L-cysteine + N(6)-ubiquitinyl-[acceptor protein]-L-lysine.. Its function is as follows. E3 ubiquitin-protein ligase which mediates ubiquitination and subsequent proteasomal degradation of target proteins. Involved in chromosome segregation and cell cycle regulation. May play a role in the acrosome reaction and fertilization. In Homo sapiens (Human), this protein is E3 ubiquitin-protein ligase TRIM36 (TRIM36).